Reading from the N-terminus, the 206-residue chain is Small ribosomal subunit protein uS4 (206 aa).

Residues 96 to 156 (CRLDNVVYRM…EKSKNQLRIA (61 aa)) enclose the S4 RNA-binding domain.

Belongs to the universal ribosomal protein uS4 family. As to quaternary structure, part of the 30S ribosomal subunit. Contacts protein S5. The interaction surface between S4 and S5 is involved in control of translational fidelity.

Functionally, one of the primary rRNA binding proteins, it binds directly to 16S rRNA where it nucleates assembly of the body of the 30S subunit. With S5 and S12 plays an important role in translational accuracy. This Pseudomonas aeruginosa (strain LESB58) protein is Small ribosomal subunit protein uS4.